The sequence spans 467 residues: MSHQHTLPVTVPAVVQGPLKTVCSPDHIQQEQAKQPTPHPTQCQVFTEIQEKGFPKHEEKRPNPVKDLPDQKCEHQQQPGPQKQQLQVKKSQQELQEQELHLEKQQLPQEPQGLLCLEQQQQQEPQMQEQHLRQQQQQQQQQQQQQQQQQQQETQEQGLCLGQKQQQQQQDMLVPQELHLRQHQEKLQDPELHLGQQQKTPEEQKLIPGEKQQELHLGQRHQEPQEQELHLGQKQKQKLHEPELQLGKQQHQKPSEPELPLGKQQQESPEPELPLGKQQQQESPEPELQLGKQQQSHEPDMAGDQKEKQKLHKPELYLRKQQYQESPDPELSLGKQQHQECQEPELQLEEKQHQKPPEPELHLGKQQESHEPDMAEDLEEKQKLGEPELHLGKQQQQQIEREGYQGPKSLGQSLKQEKASREQQLDYSHLEQEKELSDQPLDQALVKKGKQLERKKHELENRTQQEK.

Residues 48-467 form a disordered region; it reads EIQEKGFPKH…ELENRTQQEK (420 aa). The span at 49–75 shows a compositional bias: basic and acidic residues; that stretch reads IQEKGFPKHEEKRPNPVKDLPDQKCEH. Low complexity-rich tracts occupy residues 76–95 and 105–177; these read QQQPGPQKQQLQVKKSQQEL and QQLP…VPQE. Composition is skewed to basic and acidic residues over residues 178–192 and 220–231; these read LHLRQHQEKLQDPEL and RHQEPQEQELHL. The segment covering 278 to 290 has biased composition (low complexity); it reads QQQQESPEPELQL. Basic and acidic residues-rich tracts occupy residues 295-318, 348-373, 380-391, 415-437, and 450-467; these read QSHEPDMAGDQKEKQKLHKPELYL, LEEKQHQKPPEPELHLGKQQESHEPD, EKQKLGEPELHL, KQEKASREQQLDYSHLEQEKELS, and KQLERKKHELENRTQQEK.

This sequence belongs to the involucrin family. Directly or indirectly cross-linked to cornifelin (CNFN). In terms of processing, substrate of transglutaminase. Specific glutamines or lysines are cross-linked to keratins, desmoplakin and to inter involucrin molecules. In terms of tissue distribution, keratinocytes of epidermis and other stratified squamous epithelia.

Its subcellular location is the cytoplasm. Its function is as follows. Part of the insoluble cornified cell envelope (CE) of stratified squamous epithelia. This chain is Involucrin (Ivl), found in Mus musculus (Mouse).